Reading from the N-terminus, the 247-residue chain is LHFPL tetraspan subfamily member 4 protein (247 aa).

The next 4 helical transmembrane spans lie at Ile22–Ile42, Phe97–Phe117, Ile127–Pro147, and Ile178–Gly198.

The protein belongs to the LHFP family. In terms of assembly, interacts with GABA(A) receptor subunits. Interacts with GABRB3. Interacts with GABRA2. Interacts with GABRG2. Interacts with GABRA1. Identified in a complex of 720 kDa composed of LHFPL4, NLGN2, GABRA1, GABRB2, GABRG2 and GABRB3. Interacts with NLGN2; leading to mutual regulation of protein level and synaptic clustering. As to expression, highly expressed in the brain, including the cortex, hippocampus, midbrain, olfactory bulb pona plus medulla (at protein level). Expressed in the in the cerebellar granular layer and in granular layer. Colocalized with GPHN at inhibitory synapses. Weakly expressed in heart, testis, lung, intestine, vagina, ovary and uterus.

The protein resides in the cell projection. The protein localises to the dendrite. Its subcellular location is the postsynaptic cell membrane. In terms of biological role, plays a role in the regulation of inhibitory synapse formation and function by being involved in maintening gamma-aminobutyric acid receptors (GABAARs) clustering and their associated scaffold proteins at inhibitory synaptic sites. Acts in concert with NLGN2 to recruit or stabilize GABAARs. This is LHFPL tetraspan subfamily member 4 protein from Mus musculus (Mouse).